The sequence spans 545 residues: Probable sucrose-6-phosphate hydrolase (545 aa).

Substrate contacts are provided by residues 107–110 (LLND), Q126, 169–170 (FS), 230–231 (RD), and E285. D110 is an active-site residue.

This sequence belongs to the glycosyl hydrolase 32 family.

The protein localises to the cytoplasm. It catalyses the reaction Hydrolysis of terminal non-reducing beta-D-fructofuranoside residues in beta-D-fructofuranosides.. It participates in glycan biosynthesis; sucrose metabolism. In terms of biological role, enables the bacterium to metabolize sucrose as a sole carbon source. The protein is Probable sucrose-6-phosphate hydrolase of Psychromonas ingrahamii (strain DSM 17664 / CCUG 51855 / 37).